Consider the following 62-residue polypeptide: U8-theraphotoxin-Cg1a 2 (62 aa).

Positions Met-1–Ala-21 are cleaved as a signal peptide. The propeptide occupies Thr-22–Arg-29. Disulfide bonds link Cys-31-Cys-46, Cys-38-Cys-51, and Cys-45-Cys-58.

This sequence belongs to the neurotoxin 10 (Hwtx-1) family. 30 (Jztx-14) subfamily. As to expression, expressed by the venom gland.

It is found in the secreted. Functionally, probable ion channel inhibitor. The protein is U8-theraphotoxin-Cg1a 2 of Chilobrachys guangxiensis (Chinese earth tiger tarantula).